The chain runs to 256 residues: Spheroidene monooxygenase (256 aa).

The span at 1-23 (MTNELSNAAGASQQGPAASSFSA) shows a compositional bias: low complexity. A disordered region spans residues 1 to 26 (MTNELSNAAGASQQGPAASSFSADTP).

This sequence belongs to the CrtA family. Heme serves as cofactor.

The enzyme catalyses spheroidene + 4 reduced [2Fe-2S]-[ferredoxin] + 2 O2 + 4 H(+) = spheroiden-2-one + 4 oxidized [2Fe-2S]-[ferredoxin] + 3 H2O. It catalyses the reaction spirilloxanthin + 4 reduced [2Fe-2S]-[ferredoxin] + 2 O2 + 4 H(+) = 2-oxospirilloxanthin + 4 oxidized [2Fe-2S]-[ferredoxin] + 3 H2O. The catalysed reaction is 2-oxospirilloxanthin + 4 reduced [2Fe-2S]-[ferredoxin] + 2 O2 + 4 H(+) = 2,2'-dioxospirilloxanthin + 4 oxidized [2Fe-2S]-[ferredoxin] + 3 H2O. It carries out the reaction spheroidene + 2 reduced [2Fe-2S]-[ferredoxin] + O2 + 2 H(+) = 2-hydroxyspheroidene + 2 oxidized [2Fe-2S]-[ferredoxin] + H2O. The enzyme catalyses 2-hydroxyspheroidene + 2 reduced [2Fe-2S]-[ferredoxin] + O2 + 2 H(+) = 2,2-dihydroxyspheroidene + 2 oxidized [2Fe-2S]-[ferredoxin] + H2O. It catalyses the reaction 2,2-dihydroxyspheroidene = spheroiden-2-one + H2O. The catalysed reaction is spirilloxanthin + 2 reduced [2Fe-2S]-[ferredoxin] + O2 + 2 H(+) = 2-hydroxyspirilloxanthin + 2 oxidized [2Fe-2S]-[ferredoxin] + H2O. It carries out the reaction 2-hydroxyspirilloxanthin + 2 reduced [2Fe-2S]-[ferredoxin] + O2 + 2 H(+) = 2,2-dihydroxyspirilloxanthin + 2 oxidized [2Fe-2S]-[ferredoxin] + H2O. The enzyme catalyses 2,2-dihydroxyspirilloxanthin = 2-oxospirilloxanthin + H2O. It catalyses the reaction 2-oxospirilloxanthin + 2 reduced [2Fe-2S]-[ferredoxin] + O2 + 2 H(+) = 2'-hydroxy-2-oxospirilloxanthin + 2 oxidized [2Fe-2S]-[ferredoxin] + H2O. The catalysed reaction is 2'-hydroxy-2-oxospirilloxanthin + 2 reduced [2Fe-2S]-[ferredoxin] + O2 + 2 H(+) = 2',2'-dihydroxy-2-oxospirilloxanthin + 2 oxidized [2Fe-2S]-[ferredoxin] + H2O. It carries out the reaction 2',2'-dihydroxy-2-oxospirilloxanthin = 2,2'-dioxospirilloxanthin + H2O. Its pathway is carotenoid biosynthesis; spheroidene biosynthesis. The protein operates within carotenoid biosynthesis; spirilloxanthin biosynthesis. Its function is as follows. Involved in the biosynthesis of the carotenoids spheroidene and spirilloxanthin. Catalyzes the introduction of one keto group at the C-2 position of spheroidene and two keto groups at the C-2 and C-2' positions of spirilloxanthin. This is Spheroidene monooxygenase from Rubrivivax gelatinosus (Rhodocyclus gelatinosus).